The sequence spans 469 residues: Glutamate--tRNA ligase (469 aa).

Positions 9–19 (PSPTGFLHVGG) match the 'HIGH' region motif. The 'KMSKS' region motif lies at 236 to 240 (KLSKR). Lysine 239 is a binding site for ATP.

Belongs to the class-I aminoacyl-tRNA synthetase family. Glutamate--tRNA ligase type 1 subfamily. As to quaternary structure, monomer.

The protein resides in the cytoplasm. It carries out the reaction tRNA(Glu) + L-glutamate + ATP = L-glutamyl-tRNA(Glu) + AMP + diphosphate. Functionally, catalyzes the attachment of glutamate to tRNA(Glu) in a two-step reaction: glutamate is first activated by ATP to form Glu-AMP and then transferred to the acceptor end of tRNA(Glu). The protein is Glutamate--tRNA ligase of Pseudoalteromonas atlantica (strain T6c / ATCC BAA-1087).